We begin with the raw amino-acid sequence, 90 residues long: UPF0298 protein SSU05_1549 (90 aa).

It belongs to the UPF0298 family.

It is found in the cytoplasm. This Streptococcus suis (strain 05ZYH33) protein is UPF0298 protein SSU05_1549.